A 428-amino-acid chain; its full sequence is Adenylosuccinate synthetase (428 aa).

GTP is bound by residues 11-17 (GDEGKGK) and 39-41 (GHT). Catalysis depends on aspartate 12, which acts as the Proton acceptor. Aspartate 12 and glycine 39 together coordinate Mg(2+). Residues 12 to 15 (DEGK), 37 to 40 (NAGH), threonine 130, arginine 144, asparagine 226, threonine 241, and arginine 305 each bind IMP. Residue histidine 40 is the Proton donor of the active site. 301–307 (VTTGRKR) serves as a coordination point for substrate. GTP contacts are provided by residues arginine 307, 333-335 (KLD), and 415-417 (GTG).

Belongs to the adenylosuccinate synthetase family. In terms of assembly, homodimer. It depends on Mg(2+) as a cofactor.

Its subcellular location is the cytoplasm. The catalysed reaction is IMP + L-aspartate + GTP = N(6)-(1,2-dicarboxyethyl)-AMP + GDP + phosphate + 2 H(+). The protein operates within purine metabolism; AMP biosynthesis via de novo pathway; AMP from IMP: step 1/2. Plays an important role in the de novo pathway and in the salvage pathway of purine nucleotide biosynthesis. Catalyzes the first committed step in the biosynthesis of AMP from IMP. This Candida dubliniensis (strain CD36 / ATCC MYA-646 / CBS 7987 / NCPF 3949 / NRRL Y-17841) (Yeast) protein is Adenylosuccinate synthetase.